The chain runs to 912 residues: MASDSDTEEFFDAPEDVNLSCSPAVSPLKSETFILKEEATYSKKAETRNIELKQDDSKEIIDSIIEESQKCSDTENENPVVEEKTEVLHETLIGDSVKTKQDLLSNIPELVVTESTFHDGVEDPLQQQISEYLEPDISRSQDAGPSADSAYVPSAIENIVDLTQDLKITEELKIAEEPEIPLIQEETKDPSKNIVEDVFSKLPTSDIIEQLPPAKPPRQICVEPDIVASTKKSGPNRPPQPINAPPPRPPPPARPAPPPRKKKGDTDFDRSSGFEYQKDGFLAGGLLSPNTLTENMNRDSQPSLDLASATSGEKIVTAQENGKAADGQLSSQSSECLGPQRPRSNSGRELTDDEILASVMIKNLDTGEEIPLSLAEEKLPTGINPLTLYIMRRTKEYVSNDAAQSDDEEKPQSHQSETDGGKLKQKTTQLKKFLGKSVKRAKHLAEEYGERAVNKVKSVRDEVFHTDQDDPSSSDDEGMPYTRPVKFKAAHGFKGPYDFEQIKVVQDLSGEHVGAVWTMKFSHCGRLLASAGQDNVVRIWVLKNAFDYFNNMRIKYNTEGRVSPSPSQESLNSSKSDTDGGVFSGTDDVDPDDKNAPFRQVPFCKYKGHTADLLDLSWSKNYFLLSSSMDKTVRLWHISRRECLCCFQHIDFVTAIAFHPRDDRYFLSGSLDGKLRLWNIPDKKVALWNEIDGQTKLITAANFCQNGKHAVIGTYDGRCIFYDTEHLKYHTQIHVRSTRGRNRVGRKITGIEPLPGENKILVTSNDSRIRLYDLRDLSLSMKYKGCVNSSSQIKASFSHDFTYIVSGSEDKYVYIWSTYHDLSKFTSVRRDRNDFWEGIKAHNAVVTSAIFAPNPGLMVSAETSSEKQEGDQAEPVENIPSGALKSDHTEVLLSADFTGAIKVFINKKKNIS.

3 disordered regions span residues 206-352 (DIIE…ELTD), 399-426 (SNDA…LKQK), and 460-481 (RDEV…GMPY). A compositionally biased stretch (pro residues) spans 236–258 (NRPPQPINAPPPRPPPPARPAPP). The segment covering 264-278 (GDTDFDRSSGFEYQK) has biased composition (basic and acidic residues). Over residues 288–311 (SPNTLTENMNRDSQPSLDLASATS) the composition is skewed to polar residues. The segment covering 410–422 (KPQSHQSETDGGK) has biased composition (basic and acidic residues). Acidic residues predominate over residues 469-478 (DDPSSSDDEG). The WD 1 repeat unit spans residues 511 to 550 (EHVGAVWTMKFSHCGRLLASAGQDNVVRIWVLKNAFDYFN). The tract at residues 559–594 (EGRVSPSPSQESLNSSKSDTDGGVFSGTDDVDPDDK) is disordered. Over residues 563–575 (SPSPSQESLNSSK) the composition is skewed to low complexity. WD repeat units follow at residues 608–646 (GHTA…CLCC), 648–688 (QHID…VALW), 693–732 (GQTK…YHTQ), 743–782 (RVGR…LSMK), 787–826 (VNSS…SKFT), 841–880 (AHNA…ENIP), and 882–912 (GALK…KNIS). Positions 861-882 (AETSSEKQEGDQAEPVENIPSG) are disordered.

It is found in the cytoplasm. Its subcellular location is the cytosol. The protein localises to the perinuclear region. The protein resides in the endosome membrane. It localises to the golgi apparatus. It is found in the trans-Golgi network. Functionally, downstream effector for rab11. May be involved in vesicle recycling. May also be involved in the inhibition of the intracellular ciliogenesis pathway. The polypeptide is WD repeat-containing protein 44 (wdr44) (Xenopus laevis (African clawed frog)).